The sequence spans 275 residues: T-cell ecto-ADP-ribosyltransferase 1 (275 aa).

Residues 1-20 (MPSNICKFFLTWWLIQQVTG) form the signal peptide. 2 cysteine pairs are disulfide-bonded: Cys-41-Cys-243 and Cys-141-Cys-193. Residue Asn-58 is glycosylated (N-linked (GlcNAc...) asparagine). One can recognise a TR mART core domain in the interval 61–238 (EKLKVAWEEA…IFLDSPKRKK (178 aa)). Residues Tyr-98, Arg-146, and Gln-164 each contribute to the NAD(+) site. Arg-146 is an active-site residue. Ser-167 is an active-site residue. Ser-202 contributes to the NAD(+) binding site. Glu-209 is a catalytic residue. The GPI-anchor amidated serine moiety is linked to residue Ser-246. The propeptide at 247–275 (SAGTRESCVSLFLVVLTSLLVQLLCLAEP) is removed in mature form.

Belongs to the Arg-specific ADP-ribosyltransferase family. In terms of tissue distribution, postthymic T-cells.

Its subcellular location is the cell membrane. It catalyses the reaction L-arginyl-[protein] + NAD(+) = N(omega)-(ADP-D-ribosyl)-L-arginyl-[protein] + nicotinamide + H(+). The catalysed reaction is NAD(+) + H2O = ADP-D-ribose + nicotinamide + H(+). Functionally, has NAD(+) glycohydrolase activity and extremely low ADP-ribosyltransferase activity. This is T-cell ecto-ADP-ribosyltransferase 1 (Art2a) from Rattus norvegicus (Rat).